We begin with the raw amino-acid sequence, 581 residues long: MAGRIPRVFINDLLARTDIVDLIDARVKLKKQGKNFHACCPFHNEKTPSFTVNGEKQFYHCFGCGAHGNAIDFLMNYDKLEFVETVEELAAMHNLEVPFEAGSGPSQIERHQRQTLYQLMDGLNTFYQQSLQQPVATSARQYLEKRGLSHEVIARFAIGFAPPGWDNVLKRFGGNPENRQSLVDAGMLVTNDQGRSYDRFRERVMFPIRDKRGRVIGFGGRVLGNDTPKYLNSPETDIFHKGRQLYGLYEAQQDNAEPNRLLVVEGYMDVVALAQYGINYAVASLGTSTTADHIQLLFRATNNVICCYDGDRAGRDAAWRALETALPYMTDGRQLRFMFLPDGEDPDTLVRKEGKEAFEARMEQAMPLSAFLFNSLMPQVDLSTPDGRARLSTLALPLISQVPGETLRIYLRQELGNKLGILDDSQLERLMPKAAESGVSRPVPQLKRTTMRILIGLLVQNPELATLVPPLENLDENKLPGLGLFRELVNTCLSQPGLTTGQLLEHYRGTNNAATLEKLSMWDDIADKNIAEQTFTDSLNHMFDSLLELRQEELIARERTHGLSNEERLELWTLNQELAKK.

A CHC2-type zinc finger spans residues 40-64 (CPFHNEKTPSFTVNGEKQFYHCFGC). Residues 259–341 (NRLLVVEGYM…GRQLRFMFLP (83 aa)) form the Toprim domain. 3 residues coordinate Mg(2+): Glu-265, Asp-309, and Asp-311.

Belongs to the DnaG primase family. In terms of assembly, monomer. Interacts with DnaB. Requires Zn(2+) as cofactor. It depends on Mg(2+) as a cofactor.

The enzyme catalyses ssDNA + n NTP = ssDNA/pppN(pN)n-1 hybrid + (n-1) diphosphate.. RNA polymerase that catalyzes the synthesis of short RNA molecules used as primers for DNA polymerase during DNA replication. The sequence is that of DNA primase from Escherichia coli O6:H1 (strain CFT073 / ATCC 700928 / UPEC).